The following is a 2171-amino-acid chain: Mediator of DNA damage checkpoint protein 1 (2171 aa).

Positions 1 to 19 (MEDTQAIDWDVEEEEETEQ) are enriched in acidic residues. The tract at residues 1 to 22 (MEDTQAIDWDVEEEEETEQSSE) is disordered. Residues 1 to 150 (MEDTQAIDWD…SRGPLTVEET (150 aa)) form an interaction with CHEK2 region. The segment at 2–220 (EDTQAIDWDV…PFAFNLNSDT (219 aa)) is interaction with the MRN complex. A Phosphothreonine modification is found at T4. The 52-residue stretch at 54–105 (NVVGRMPDCSVALPFPSISKQHAEIEILAWDKAPILRDCGSLNGTQILRPPK) folds into the FHA domain. A Phosphoserine modification is found at S108. Residues 145–568 (LTVEETPRVQ…PAKLLVVSLE (424 aa)) are required for nuclear localization (NLS1). T146 is modified (phosphothreonine). Phosphoserine occurs at positions 168, 176, 196, and 218. Disordered stretches follow at residues 185–248 (RTTS…AKQS) and 261–317 (DQPL…AEVH). T220 carries the post-translational modification Phosphothreonine. A compositionally biased stretch (basic and acidic residues) spans 261-278 (DQPLVKERDDDTKVKRGA). Position 299 is a phosphoserine (S299). T301 is subject to Phosphothreonine. Residues 306-317 (DSRPPGRPAEVH) are compositionally biased toward basic and acidic residues. Residue S329 is modified to Phosphoserine. The residue at position 331 (T331) is a Phosphothreonine. A disordered region spans residues 355-387 (GVGTRGPGAPGLAHLQESQAGSDTDVEEGKAPQ). A phosphoserine mark is found at S372 and S376. T378 bears the Phosphothreonine mark. 3 positions are modified to phosphoserine: S394, S397, and S402. T404 is modified (phosphothreonine). S411 is subject to Phosphoserine. Disordered regions lie at residues 443-469 (QRSQ…NREA) and 481-522 (VRAH…VDIN). The residue at position 449 (T449) is a Phosphothreonine. Position 453 is a phosphoserine (S453). T455 bears the Phosphothreonine mark. S485, S495, S498, S504, S505, and S513 each carry phosphoserine. Residues 513–522 (SQASTTVDIN) are compositionally biased toward polar residues. T523 is subject to Phosphothreonine. Phosphoserine is present on S590. Residue K616 forms a Glycyl lysine isopeptide (Lys-Gly) (interchain with G-Cter in SUMO1); alternate linkage. K616 participates in a covalent cross-link: Glycyl lysine isopeptide (Lys-Gly) (interchain with G-Cter in SUMO2); alternate. Disordered stretches follow at residues 653–689 (DTLG…DNYG) and 780–1969 (SPPR…TKLN). Over residues 671-685 (GREREQHVGGTKDSE) the composition is skewed to basic and acidic residues. Residues S780 and S793 each carry the phosphoserine modification. K812 carries the post-translational modification N6-acetyllysine. Composition is skewed to basic and acidic residues over residues 819–844 (ETAE…ERQT), 851–862 (ELTKGKQDREQK), 868–905 (DTQR…EKQV), and 914–951 (AFER…RGEP). Phosphoserine occurs at positions 955 and 998. The span at 955–964 (SQDQKGQASS) shows a compositional bias: polar residues. Residues 1016-1031 (KASRIRAAEKVSRGDQ) show a composition bias toward basic and acidic residues. S1033 carries the post-translational modification Phosphoserine. Positions 1040 to 1051 (PTVPEAPAPPQK) are enriched in pro residues. Residues S1068 and S1086 each carry the phosphoserine modification. A compositionally biased stretch (basic residues) spans 1103–1113 (PKPKIRTRKSS). Composition is skewed to polar residues over residues 1129-1157 (PSTS…SVKT) and 1170-1187 (PCTS…SQVT). The interval 1148–1692 (SRTNRSSVKT…TNRSSVKTPE (545 aa)) is interaction with the PRKDC complex. The residue at position 1157 (T1157) is a Phosphothreonine. At T1198 the chain carries Phosphothreonine. Over residues 1210–1227 (QPSTSTDRPVTSEPTSHA) the composition is skewed to polar residues. S1235 bears the Phosphoserine mark. T1239 is modified (phosphothreonine). Over residues 1251–1268 (QPSTSTDQPVTSEPTYQA) the composition is skewed to polar residues. Residues T1280 and T1302 each carry the phosphothreonine modification. Positions 1306–1318 (TSRTTRSRTNMSS) are enriched in low complexity. Composition is skewed to polar residues over residues 1334 to 1350 (PSTS…TSRA) and 1375 to 1403 (PSTS…SVKT). Positions 1429–1441 (TSRTTRSRTNMSS) are enriched in low complexity. Residues 1457 to 1473 (PSTSTEQPVTPEPTSRA) are compositionally biased toward polar residues. Residues S1481 and S1482 each carry the phosphoserine modification. K1484 carries the post-translational modification N6-acetyllysine. T1485 carries the post-translational modification Phosphothreonine. A Glycyl lysine isopeptide (Lys-Gly) (interchain with G-Cter in SUMO1); alternate cross-link involves residue K1495. A Glycyl lysine isopeptide (Lys-Gly) (interchain with G-Cter in SUMO2); alternate cross-link involves residue K1495. Composition is skewed to polar residues over residues 1498 to 1526 (PSTS…SVKT), 1538 to 1557 (QPST…QVTR), and 1580 to 1596 (ASAS…TSRT). A phosphothreonine mark is found at T1507 and T1548. Residues T1615 and T1630 each carry the phosphothreonine modification. Composition is skewed to polar residues over residues 1620–1649 (QPST…SVKT) and 1661–1678 (QPST…TSRA). Residue S1646 is modified to Phosphoserine. Phosphothreonine occurs at positions 1649 and 1671. Position 1686 is a phosphoserine (S1686). Residue T1690 is modified to Phosphothreonine. Residues 1693–1702 (PVVPTAPEPH) show a composition bias toward pro residues. Polar residues predominate over residues 1706–1718 (STDQPVTPKLTSR). A phosphothreonine mark is found at T1712, T1746, and T1753. Residues 1760 to 1771 (GGQSKTLRSSTV) show a composition bias toward polar residues. Position 1763 is a phosphoserine (S1763). A Phosphothreonine modification is found at T1779. Polar residues predominate over residues 1780–1801 (PEFQSPVTTDQPISPEPITQPS). Residues 1780–2171 (PEFQSPVTTD…VLSPLEMSST (392 aa)) form a required for nuclear localization (NLS2) region. Residues S1784 and S1793 each carry the phosphoserine modification. A Glycyl lysine isopeptide (Lys-Gly) (interchain with G-Cter in SUMO2) cross-link involves residue K1822. S1857 is subject to Phosphoserine. A Glycyl lysine isopeptide (Lys-Gly) (interchain with G-Cter in SUMO2) cross-link involves residue K1872. Residue T1882 is modified to Phosphothreonine. Phosphoserine is present on S1902. The segment covering 1905 to 1918 (HQKQPQRGEVSQKT) has biased composition (polar residues). A Glycyl lysine isopeptide (Lys-Gly) (interchain with G-Cter in SUMO1); alternate cross-link involves residue K1922. K1922 is covalently cross-linked (Glycyl lysine isopeptide (Lys-Gly) (interchain with G-Cter in SUMO2); alternate). The segment covering 1929 to 1939 (AEKPGKEEDVV) has biased composition (basic and acidic residues). T1940 is subject to Phosphothreonine. 2 BRCT domains span residues 1974–2052 (APKV…EYVV) and 2073–2164 (RERR…FVLS). At R2025 the chain carries Omega-N-methylarginine.

Homodimer. Interacts with H2AX, which requires phosphorylation of H2AX on 'Ser-139'. Interacts with the MRN complex, composed of MRE11, RAD50, and NBN. Interacts with CHEK2, which requires ATM-mediated phosphorylation of 'Thr-68' within the FHA domain of CHEK2. Interacts constitutively with the BRCA1-BARD1 complex, SMC1A and TP53BP1. Interacts with ATM and FANCD2, and these interactions are reduced upon DNA damage. Also interacts with the PRKDC complex, composed of XRCC6/KU70, XRCC5/KU80 and PRKDC/XRCC7. This interaction may be required for PRKDC autophosphorylation, which is essential for DNA double strand break (DSB) repair. When phosphorylated by ATM, interacts with RNF8 (via FHA domain). Interacts with CEP164. When phosphorylated, interacts with APTX (via FHA-like domain). Interacts (when phosphorylated) with TOPBP1; promoting TOPBP1 localization to DNA damage sites during mitosis. Interacts (when phosphorylated) with NBN; promoting NBN and MRN complex localization to DNA damage sites. In terms of processing, phosphorylated upon exposure to ionizing radiation (IR), ultraviolet radiation (UV), and hydroxyurea (HU). Phosphorylation in response to IR requires ATM, NBN, and possibly CHEK2. Also phosphorylated during the G2/M phase of the cell cycle and during activation of the mitotic spindle checkpoint. Phosphorylation at Thr-4 by ATM stabilizes and enhances homodimerization via the FHA domain. Phosphorylated at Ser-168 and Ser-196 by CK2 in response to DNA damage during mitosis, promoting interaction with TOPBP1. Phosphorylated by CK2 in response to DNA damage, promoting interaction with NBN and recruitment of the MRN complex to DNA damage sites. Sumoylation at Lys-1922 by PIAS4 following DNA damage promotes ubiquitin-mediated degradation. Post-translationally, ubiquitinated by RNF4, leading to proteasomal degradation; undergoes 'Lys-48'-linked polyubiquitination.

Its subcellular location is the nucleus. It localises to the chromosome. Histone reader protein required for checkpoint-mediated cell cycle arrest in response to DNA damage within both the S phase and G2/M phases of the cell cycle. Specifically recognizes and binds histone H2AX phosphorylated at 'Ser-139', a marker of DNA damage, serving as a scaffold for the recruitment of DNA repair and signal transduction proteins to discrete foci of DNA damage sites. Also required for downstream events subsequent to the recruitment of these proteins. These include phosphorylation and activation of the ATM, CHEK1 and CHEK2 kinases, and stabilization of TP53/p53 and apoptosis. ATM and CHEK2 may also be activated independently by a parallel pathway mediated by TP53BP1. Required for chromosomal stability during mitosis by promoting recruitment of TOPBP1 to DNA double strand breaks (DSBs): TOPBP1 forms filamentous assemblies that bridge MDC1 and tether broken chromosomes during mitosis. Required for the repair of DSBs via homologous recombination by promoting recruitment of NBN component of the MRN complex to DSBs. The protein is Mediator of DNA damage checkpoint protein 1 (MDC1) of Pan troglodytes (Chimpanzee).